A 597-amino-acid polypeptide reads, in one-letter code: Aspartate--tRNA(Asp/Asn) ligase (597 aa).

E176 serves as a coordination point for L-aspartate. The aspartate stretch occupies residues 200-203 (QQFK). Positions 222 and 451 each coordinate L-aspartate. 222 to 224 (RDE) contacts ATP. E489 provides a ligand contact to ATP. Residue R496 participates in L-aspartate binding. 541-544 (GIDR) is an ATP binding site.

The protein belongs to the class-II aminoacyl-tRNA synthetase family. Type 1 subfamily. In terms of assembly, homodimer.

It localises to the cytoplasm. It catalyses the reaction tRNA(Asx) + L-aspartate + ATP = L-aspartyl-tRNA(Asx) + AMP + diphosphate. Functionally, aspartyl-tRNA synthetase with relaxed tRNA specificity since it is able to aspartylate not only its cognate tRNA(Asp) but also tRNA(Asn). Reaction proceeds in two steps: L-aspartate is first activated by ATP to form Asp-AMP and then transferred to the acceptor end of tRNA(Asp/Asn). The sequence is that of Aspartate--tRNA(Asp/Asn) ligase from Orientia tsutsugamushi (strain Boryong) (Rickettsia tsutsugamushi).